We begin with the raw amino-acid sequence, 249 residues long: uncharacterized protein (249 aa).

Polar residues-rich tracts occupy residues 66-79 (NASLESGQSSTISP) and 92-119 (ASGSVSANKTFQSTESSALHQPKSSSSE). Positions 66–142 (NASLESGQSS…GPTSPRVTPG (77 aa)) are disordered.

The protein localises to the plastid. The protein resides in the chloroplast. This is an uncharacterized protein from Chlorella vulgaris (Green alga).